The primary structure comprises 498 residues: uncharacterized protein (498 aa).

The signal sequence occupies residues 1–26 (MEESSMAQASLICLLLSFSIIMLSNA). Residues 27 to 441 (ADISIDCGSS…GEEKSSSNLA (415 aa)) lie on the Extracellular side of the membrane. N-linked (GlcNAc...) asparagine glycans are attached at residues N44, N150, N354, and N357. A disordered region spans residues 351–439 (GSGNGTNSTS…KSGEEKSSSN (89 aa)). The span at 362 to 414 (SGGGSPSPGGGSGSPPSTGGGSGSPPSTGGGGGSPSKGGGGGKSGGSNNGDGG) shows a compositional bias: gly residues. Residues 418–436 (ASEDEKSADSSGKSGEEKS) show a composition bias toward basic and acidic residues. A helical membrane pass occupies residues 442-462 (LPLGISLPTLLSLGAGGWGVW). At 463–498 (KYFIKPRRHPESELPLKQNISLQVNMGNATVVNAGQ) the chain is on the cytoplasmic side.

It localises to the membrane. This is an uncharacterized protein from Arabidopsis thaliana (Mouse-ear cress).